The primary structure comprises 195 residues: Cysteine/O-acetylserine efflux protein (195 aa).

Over 1 to 7 the chain is Periplasmic; the sequence is MTPTLLS. The helical transmembrane segment at 8–28 threads the bilayer; the sequence is AFWTYTLITAMTPGPNNILAL. Residues 29-46 are Cytoplasmic-facing; the sequence is SSATSHGFRQSTRVLAGM. The chain crosses the membrane as a helical span at residues 47–67; it reads SLGFLIVMLLCAGISFSLAVI. At 68–69 the chain is on the periplasmic side; the sequence is DP. Residues 70-90 traverse the membrane as a helical segment; the sequence is AAVHLLSWAGAAYIVWLAWKI. Topologically, residues 91 to 104 are cytoplasmic; sequence ATSPTKEDGLQAKP. Residues 105-125 traverse the membrane as a helical segment; sequence ISFWASFALQFVNVKIILYGV. Residues 126-141 are Periplasmic-facing; that stretch reads TALSTFVLPQTQALSW. Residues 142–162 form a helical membrane-spanning segment; that stretch reads VVGVSVLLAMIGTFGNVCWAL. The Cytoplasmic segment spans residues 163 to 176; the sequence is AGHLFQRLFRQYGR. A helical transmembrane segment spans residues 177 to 194; the sequence is QLNIVLALLLIYCAVRIF. Tyr195 is a topological domain (periplasmic).

It belongs to the Rht family.

It is found in the cell inner membrane. The catalysed reaction is O-acetyl-L-serine(in) = O-acetyl-L-serine(out). It catalyses the reaction L-cysteine(in) = L-cysteine(out). Functionally, exporter of O-acetylserine (OAS) and cysteine. In Escherichia coli O139:H28 (strain E24377A / ETEC), this protein is Cysteine/O-acetylserine efflux protein (eamB).